The primary structure comprises 265 residues: MVNLTSTELERYRRQIILPGFGQEAQQRLKSATVLVTGVGGLGGTAALYLAIAGVGRLILVRGGELRLDDMNRQILMSDDWVGKPRVFKAKKRLEDINPDVEVEAIFDYVTPDNVDSLIQSADVALDCAHNFGERDLLNAACVRWRKPMVEAAMDGMDAYLTTIIPGVTPCLSCLFPEKPEWDRRGFGVLGAVSGTLACLTALEAMKLITGFSQPLSSELLTMNLHQLTFAKRRSYRDRNCPVCGTHSQHYPHPQQLSRVLVNSQ.

It belongs to the HesA/MoeB/ThiF family.

This is Protein HesA, vegetative (hesA2) from Trichormus variabilis (strain ATCC 29413 / PCC 7937) (Anabaena variabilis).